Reading from the N-terminus, the 417-residue chain is Serine--tRNA ligase (417 aa).

Residue 226 to 228 (TSE) coordinates L-serine. ATP is bound by residues 257–259 (RRE) and valine 273. Glutamate 280 serves as a coordination point for L-serine. Residue 344 to 347 (ELTS) coordinates ATP. L-serine is bound at residue threonine 379.

It belongs to the class-II aminoacyl-tRNA synthetase family. Type-1 seryl-tRNA synthetase subfamily. In terms of assembly, homodimer. The tRNA molecule binds across the dimer.

It is found in the cytoplasm. The enzyme catalyses tRNA(Ser) + L-serine + ATP = L-seryl-tRNA(Ser) + AMP + diphosphate + H(+). It catalyses the reaction tRNA(Sec) + L-serine + ATP = L-seryl-tRNA(Sec) + AMP + diphosphate + H(+). It functions in the pathway aminoacyl-tRNA biosynthesis; selenocysteinyl-tRNA(Sec) biosynthesis; L-seryl-tRNA(Sec) from L-serine and tRNA(Sec): step 1/1. In terms of biological role, catalyzes the attachment of serine to tRNA(Ser). Is also able to aminoacylate tRNA(Sec) with serine, to form the misacylated tRNA L-seryl-tRNA(Sec), which will be further converted into selenocysteinyl-tRNA(Sec). In Mycolicibacterium smegmatis (strain ATCC 700084 / mc(2)155) (Mycobacterium smegmatis), this protein is Serine--tRNA ligase.